We begin with the raw amino-acid sequence, 197 residues long: Large ribosomal subunit protein eL15 (197 aa).

Composition is skewed to basic residues over residues 70–90 (PKGGRRKSRPKKGRRPKRMGK), 163–179 (RGKTGAGKKARGLRKRG), and 187–197 (PSLRAHRRRGK). Disordered stretches follow at residues 70-99 (PKGGRRKSRPKKGRRPKRMGKNKFSPGKSK) and 163-197 (RGKTGAGKKARGLRKRGKGAEKVRPSLRAHRRRGK).

The protein belongs to the eukaryotic ribosomal protein eL15 family.

The chain is Large ribosomal subunit protein eL15 from Methanopyrus kandleri (strain AV19 / DSM 6324 / JCM 9639 / NBRC 100938).